The following is a 326-amino-acid chain: Protein SEH1 (326 aa).

WD repeat units lie at residues 7-46 (TLDS…SSTF), 54-95 (VSES…AHGL), 105-146 (NKSS…ELKN), 224-266 (DKGD…DLEG), and 278-317 (GHQG…EWHE).

The protein belongs to the WD repeat SEC13 family. As to quaternary structure, part of the nuclear pore complex (NPC). The NPC has an eight-fold symmetrical structure comprising a central transport channel and two rings, the cytoplasmic and nuclear rings, to which eight filaments are attached. The cytoplasmic filaments have loose ends, while the nuclear filaments are joined in a distal ring, forming a nuclear basket. NPCs are highly dynamic in configuration and composition, and can be devided in 3 subcomplexes, the NUP62 subcomplex, the NUP107-160 subcomplex and the NUP93 subcomplex, containing approximately 30 different nucleoporin proteins.

It localises to the nucleus envelope. The protein resides in the nucleus. It is found in the cytoplasm. The protein localises to the nuclear pore complex. In terms of biological role, required for proper export of mRNAs from the nucleus to the cytoplasm. This is Protein SEH1 from Arabidopsis thaliana (Mouse-ear cress).